The chain runs to 524 residues: GMP synthase [glutamine-hydrolyzing] (524 aa).

The region spanning 9 to 207 is the Glutamine amidotransferase type-1 domain; that stretch reads RILILDFGSQ…VIHICQCIPN (199 aa). Cys86 acts as the Nucleophile in catalysis. Catalysis depends on residues His181 and Glu183. In terms of domain architecture, GMPS ATP-PPase spans 208 to 399; the sequence is WTTKHIIEDS…LGLPADLIYR (192 aa). Residue 235–241 participates in ATP binding; it reads SGGVDSA.

Homodimer.

It catalyses the reaction XMP + L-glutamine + ATP + H2O = GMP + L-glutamate + AMP + diphosphate + 2 H(+). It participates in purine metabolism; GMP biosynthesis; GMP from XMP (L-Gln route): step 1/1. Its function is as follows. Catalyzes the synthesis of GMP from XMP. The polypeptide is GMP synthase [glutamine-hydrolyzing] (Coxiella burnetii (strain RSA 493 / Nine Mile phase I)).